We begin with the raw amino-acid sequence, 85 residues long: Small ribosomal subunit protein bS16c (85 aa).

The protein belongs to the bacterial ribosomal protein bS16 family.

The protein localises to the plastid. The protein resides in the chloroplast. In Agrostis stolonifera (Creeping bentgrass), this protein is Small ribosomal subunit protein bS16c.